The primary structure comprises 547 residues: Chaperonin GroEL (547 aa).

ATP is bound by residues 30–33, K51, 87–91, G415, 479–481, and D495; these read TLGP, DGTTT, and NAA.

Belongs to the chaperonin (HSP60) family. Forms a cylinder of 14 subunits composed of two heptameric rings stacked back-to-back. Interacts with the co-chaperonin GroES.

The protein resides in the cytoplasm. It catalyses the reaction ATP + H2O + a folded polypeptide = ADP + phosphate + an unfolded polypeptide.. Its function is as follows. Together with its co-chaperonin GroES, plays an essential role in assisting protein folding. The GroEL-GroES system forms a nano-cage that allows encapsulation of the non-native substrate proteins and provides a physical environment optimized to promote and accelerate protein folding. In Bordetella pertussis (strain Tohama I / ATCC BAA-589 / NCTC 13251), this protein is Chaperonin GroEL.